Consider the following 722-residue polypeptide: Golgin subfamily A member 5 (722 aa).

Residues 1 to 689 (MSWFTDLAGR…IFLRRYPIAR (689 aa)) lie on the Cytoplasmic side of the membrane. Disordered stretches follow at residues 90–158 (TRSS…VKPI) and 194–215 (TLSD…SHEL). The span at 91-109 (RSSIESSHNSSVNVSSHRS) shows a compositional bias: low complexity. Residues 134–148 (DKVHSSSQKETRKES) show a composition bias toward basic and acidic residues. A compositionally biased stretch (polar residues) spans 149–158 (ASVNQAVKPI). The span at 195–209 (LSDSGSSASLSTTGD) shows a compositional bias: low complexity. Residues 211-622 (KSHELSNLRL…LEHQLKNVQG (412 aa)) adopt a coiled-coil conformation. The helical; Anchor for type IV membrane protein transmembrane segment at 690–710 (VFIIIYMALLHLWVMIVLLTY) threads the bilayer. At 711-722 (TPEMHHDTPSGK) the chain is on the lumenal side.

It is found in the golgi apparatus membrane. In terms of biological role, involved in maintaining Golgi structure. Stimulates the formation of Golgi stacks and ribbons. Involved in intra-Golgi retrograde transport. The sequence is that of Golgin subfamily A member 5 (golga5) from Xenopus laevis (African clawed frog).